A 440-amino-acid chain; its full sequence is Ribosomal protein uS12 methylthiotransferase RimO (440 aa).

The 111-residue stretch at 6–116 (PKVGFVSLGC…VVTAVHEVVP (111 aa)) folds into the MTTase N-terminal domain. The [4Fe-4S] cluster site is built by Cys-15, Cys-51, Cys-80, Cys-149, Cys-153, and Cys-156. In terms of domain architecture, Radical SAM core spans 135-373 (LTPRHYAYLK…MAHQQAISAA (239 aa)). One can recognise a TRAM domain in the interval 376–440 (QLKVGKEIEV…DEYDLWAELV (65 aa)).

It belongs to the methylthiotransferase family. RimO subfamily. [4Fe-4S] cluster serves as cofactor.

It is found in the cytoplasm. It catalyses the reaction L-aspartate(89)-[ribosomal protein uS12]-hydrogen + (sulfur carrier)-SH + AH2 + 2 S-adenosyl-L-methionine = 3-methylsulfanyl-L-aspartate(89)-[ribosomal protein uS12]-hydrogen + (sulfur carrier)-H + 5'-deoxyadenosine + L-methionine + A + S-adenosyl-L-homocysteine + 2 H(+). Its function is as follows. Catalyzes the methylthiolation of an aspartic acid residue of ribosomal protein uS12. The polypeptide is Ribosomal protein uS12 methylthiotransferase RimO (Pseudomonas aeruginosa (strain UCBPP-PA14)).